An 816-amino-acid polypeptide reads, in one-letter code: Phosphatidylinositol 4-kinase beta (816 aa).

Disordered regions lie at residues 1-30, 101-120, and 248-318; these read MGDT…GSLL, EDEM…RRRR, and AHRK…SFSS. G2 carries the post-translational modification N-acetylglycine. The interaction with ACBD3 stretch occupies residues 2-68; it reads GDTIVEPAPL…VKLLHGGVAI (67 aa). Positions 29–242 constitute a PIK helical domain; the sequence is LLSVITEGVG…GTKLRKLILS (214 aa). S258 is subject to Phosphoserine. Position 263 is a phosphothreonine (T263). Phosphoserine occurs at positions 266, 275, 277, 284, and 294. 2 stretches are compositionally biased toward polar residues: residues 278–297 and 306–318; these read DATA…SNPK and SSST…SFSS. Phosphoserine is present on S428. A Phosphothreonine modification is found at T438. Residue S511 is modified to Phosphoserine. Residues T517 and T519 each carry the phosphothreonine modification. Residues 535–801 form the PI3K/PI4K catalytic domain; it reads EPWQEKVRRI…MVDGSMRSIT (267 aa). The interval 541 to 547 is G-loop; that stretch reads VRRIREG. The interval 668–676 is catalytic loop; sequence QVKDRHNGN. The tract at residues 687-711 is activation loop; the sequence is HIDFGFILSSSPRNLGFETSAFKLT.

Belongs to the PI3/PI4-kinase family. Type III PI4K subfamily. Interacts with ARF1 and ARF3 in the Golgi complex, but not with ARF4, ARF5 or ARF6. Interacts with NCS1/FREQ in a calcium-independent manner. Interacts with CALN1/CABP8 and CALN2/CABP7; in a calcium-dependent manner; this interaction competes with NCS1/FREQ binding. Interacts with ACBD3. Interacts with ARMH3, YWHAB, YWHAE, YWHAG, YWHAH, YWHAQ, YWHAZ and SFN. Interacts with GGA2 (via VHS domain); the interaction is important for PI4KB location at the Golgi apparatus membrane. Interacts with ATG9A. Mg(2+) is required as a cofactor. It depends on Mn(2+) as a cofactor.

The protein localises to the endomembrane system. The protein resides in the mitochondrion outer membrane. It is found in the rough endoplasmic reticulum membrane. Its subcellular location is the golgi apparatus. It localises to the golgi apparatus membrane. The catalysed reaction is a 1,2-diacyl-sn-glycero-3-phospho-(1D-myo-inositol) + ATP = a 1,2-diacyl-sn-glycero-3-phospho-(1D-myo-inositol 4-phosphate) + ADP + H(+). With respect to regulation, inhibited by wortmannin. Increased kinase activity upon interaction with NCS1/FREQ. Its function is as follows. Phosphorylates phosphatidylinositol (PI) in the first committed step in the production of the second messenger inositol-1,4,5,-trisphosphate (PIP). May regulate Golgi disintegration/reorganization during mitosis, possibly via its phosphorylation. Involved in Golgi-to-plasma membrane trafficking. This is Phosphatidylinositol 4-kinase beta (PI4KB) from Bos taurus (Bovine).